The following is a 381-amino-acid chain: Odorant receptor 46a, isoform A (381 aa).

The Cytoplasmic segment spans residues 1-37 (MSKGVEIFYKGQKAFLNILSLWPQIERRWRIIHQVNY). Residues 38–58 (VHVIVFWVLLFDLLLVLHVMA) traverse the membrane as a helical segment. Residue Asn59 is glycosylated (N-linked (GlcNAc...) asparagine). Topologically, residues 59 to 65 (NLSYMSE) are extracellular. Residues 66-86 (VVKAIFILATSAGHTTKLLSI) traverse the membrane as a helical segment. Residues 87-127 (KANNVQMEELFRRLDNEEFRPRGANEELIFAAACERSRKLR) are Cytoplasmic-facing. Residues 128-148 (DFYGALSFAALSMILIPQFAL) form a helical membrane-spanning segment. The Extracellular segment spans residues 149–170 (DWSHLPLKTYNPLGENTGSPAY). The chain crosses the membrane as a helical span at residues 171–191 (WLLYCYQCLALSVSCITNIGF). The Cytoplasmic portion of the chain corresponds to 192-255 (DSLCSSLFIF…KTVERLLCKP (64 aa)). Residues 256-276 (ISVQIFCSVLVLTANFYAIAV) traverse the membrane as a helical segment. Residues 277 to 287 (LSDERLELFKY) lie on the Extracellular side of the membrane. The chain crosses the membrane as a helical span at residues 288 to 308 (VTYQACMLIQIFILCYYAGEV). Topologically, residues 309–355 (TQRSLDLPHELYKTSWVDWDYRSRRIALLFMQRLHSTLRIRTLNPSL) are cytoplasmic. The helical transmembrane segment at 356 to 376 (GFDLMLFSSIVNCSYSYFALL) threads the bilayer. Residues 377–381 (KRVNS) are Extracellular-facing.

This sequence belongs to the insect chemoreceptor superfamily. Heteromeric odorant receptor channel (TC 1.A.69) family. Or2a subfamily. Interacts with Orco. Complexes exist early in the endomembrane system in olfactory sensory neurons (OSNs), coupling these complexes to the conserved ciliary trafficking pathway. As to expression, isoform A is expressed in a subset of 17 olfactory receptor neurons in the maxillary palp.

Its subcellular location is the cell membrane. In terms of biological role, odorant receptor which mediates acceptance or avoidance behavior, depending on its substrates. The odorant receptor repertoire encodes a large collection of odor stimuli that vary widely in identity, intensity, and duration. May form a complex with Orco to form odorant-sensing units, providing sensitive and prolonged odorant signaling and calcium permeability. The sequence is that of Odorant receptor 46a, isoform A (Or46a) from Drosophila melanogaster (Fruit fly).